Reading from the N-terminus, the 84-residue chain is Large ribosomal subunit protein bL31B (84 aa).

It belongs to the bacterial ribosomal protein bL31 family. Type B subfamily. In terms of assembly, part of the 50S ribosomal subunit.

The protein is Large ribosomal subunit protein bL31B of Staphylococcus aureus (strain Mu3 / ATCC 700698).